Consider the following 126-residue polypeptide: Small ribosomal subunit protein uS13 (126 aa).

A disordered region spans residues 92–126 (HRMGLPVRGQRTRTNARTRRGRRQTVAGKKKAPGK). The span at 101 to 126 (QRTRTNARTRRGRRQTVAGKKKAPGK) shows a compositional bias: basic residues.

The protein belongs to the universal ribosomal protein uS13 family. As to quaternary structure, part of the 30S ribosomal subunit. Forms a loose heterodimer with protein S19. Forms two bridges to the 50S subunit in the 70S ribosome.

Its function is as follows. Located at the top of the head of the 30S subunit, it contacts several helices of the 16S rRNA. In the 70S ribosome it contacts the 23S rRNA (bridge B1a) and protein L5 of the 50S subunit (bridge B1b), connecting the 2 subunits; these bridges are implicated in subunit movement. Contacts the tRNAs in the A and P-sites. This Nostoc sp. (strain PCC 7120 / SAG 25.82 / UTEX 2576) protein is Small ribosomal subunit protein uS13.